We begin with the raw amino-acid sequence, 229 residues long: uncharacterized protein (229 aa).

Position 22–29 (22–29 (GMIAFGKT)) interacts with ATP.

This is an uncharacterized protein from Mycoplasma pneumoniae (strain ATCC 29342 / M129 / Subtype 1) (Mycoplasmoides pneumoniae).